The chain runs to 443 residues: Serine/threonine-protein kinase ISR1 (443 aa).

Positions 135-415 constitute a Protein kinase domain; that stretch reads LPSNKLVGQG…LRNDLFQDWK (281 aa). ATP contacts are provided by residues 141–149 and Lys-169; that span reads VGQGSYSYV. The Proton acceptor role is filled by Asp-280.

It belongs to the protein kinase superfamily. Ser/Thr protein kinase family.

The catalysed reaction is L-seryl-[protein] + ATP = O-phospho-L-seryl-[protein] + ADP + H(+). It catalyses the reaction L-threonyl-[protein] + ATP = O-phospho-L-threonyl-[protein] + ADP + H(+). In terms of biological role, probable serine/threonine protein kinase which may function redundantly with MPK1-independent branch of the PCK1 pathway that is presumed to be required for the tolerance to high temperatures and staurosporine. This is Serine/threonine-protein kinase ISR1 (ISR1) from Saccharomyces cerevisiae (strain ATCC 204508 / S288c) (Baker's yeast).